A 309-amino-acid polypeptide reads, in one-letter code: Short-chain dehydrogenase/reductase ARMGADRAFT_1018437 (309 aa).

NADP(+) is bound by residues Lys-64, Asp-86, and Asn-113. The Proton donor role is filled by Ser-167. Tyr-196 and Lys-200 together coordinate NADP(+). Tyr-196 functions as the Proton acceptor in the catalytic mechanism. Lys-200 (lowers pKa of active site Tyr) is an active-site residue.

This sequence belongs to the short-chain dehydrogenases/reductases (SDR) family.

It participates in secondary metabolite biosynthesis. In terms of biological role, short-chain dehydrogenase/reductase, part of the gene cluster that mediates the biosynthesis of melleolides, a range of antifungal and phytotoxic polyketide derivatives composed of an orsellinic acid (OA) moiety esterified to various sesquiterpene alcohols. The first step in melleolides biosynthesis is performed by the delta(6)-protoilludene synthase PRO1 which catalyzes the cyclization of farnesyl diphosphate to protoilludene. The orsellinic acid synthase armB produces OA by condensing acetyl-CoA with 3 malonyl-CoA units in a three-round chain elongation reaction folowed by a C2-C7 ring closure. ArmB further catalyzes the trans-esterification of OA to the various sesquiterpene alcohols resulting from the hydroxylation of protoilludene. The melleolides cluster also includes 5 cytochrome P450 monooxygenases, 4 NAD(+)-dependent oxidoreductases, one flavin-dependent oxidoreductase, and one O-methyltransferase. The cytochrome P450 monooxygenases may be involved in protoilludene hydroxylation to elaborate melleolides with multiple alcohol groups, such as melleolide D, which carries alcohol functionalities at C-4, C-5, C-10, and C-13. The role of the NAD(+)-dependent enzymes remains unknown. Numerous melleolides, including arnamial, show 5'-O-methylation of the aromatic moiety which may be catalyzed by the methyltransferase encoded in the cluster. The flavin-dependent oxidoreductase might represent the dehydrogenase yielding the aldehyde in position 1 of arnamial and other melleolides. Finally, several halogenase localized outside of the cluster, are able to catalyze the transfer of a single chlorine atom to the melleolide backbone, resulting in a 6'-chloromelleolide product. This is Short-chain dehydrogenase/reductase ARMGADRAFT_1018437 from Armillaria gallica (Bulbous honey fungus).